The primary structure comprises 293 residues: Ribosomal protein L11 methyltransferase (293 aa).

Residues Thr-145, Gly-166, Asp-188, and Asn-230 each contribute to the S-adenosyl-L-methionine site.

This sequence belongs to the methyltransferase superfamily. PrmA family.

It localises to the cytoplasm. The catalysed reaction is L-lysyl-[protein] + 3 S-adenosyl-L-methionine = N(6),N(6),N(6)-trimethyl-L-lysyl-[protein] + 3 S-adenosyl-L-homocysteine + 3 H(+). Methylates ribosomal protein L11. The sequence is that of Ribosomal protein L11 methyltransferase from Escherichia coli O7:K1 (strain IAI39 / ExPEC).